The following is an 868-amino-acid chain: Transcription factor pynR (868 aa).

A DNA-binding region (zn(2)-C6 fungal-type) is located at residues 11-37; sequence CTFCRTRKIACSGERICNACRSRSIEC. Disordered regions lie at residues 51–88, 662–683, 715–761, and 829–868; these read NKTTSTRASISAGPAGPSPITLEDGEPGDGGHSITSAV, LSGSRDQGSRSSSSSVSSLDLS, SGIP…ASDL, and GMGERGQKRSSEKLGGLSEGDTPGTSADGGTKRRMKGMSN. Composition is skewed to low complexity over residues 663–683 and 715–727; these read SGSRDQGSRSSSSSVSSLDLS and SGIPSSISSSISH.

It localises to the nucleus. Transcription factor that regulates the expression of the gene cluster that mediates the biosynthesis of pyranonigrins, a family of antioxidative compounds. This Aspergillus niger (strain ATCC MYA-4892 / CBS 513.88 / FGSC A1513) protein is Transcription factor pynR.